Reading from the N-terminus, the 382-residue chain is Protein phosphatase 1A (382 aa).

The N-myristoyl glycine moiety is linked to residue Gly-2. The PPM-type phosphatase domain occupies 23 to 291 (RYGLSSMQGW…DNMSVILICF (269 aa)). Mn(2+) is bound by residues Asp-60, Gly-61, Asp-239, and Asp-282. 2 positions are modified to phosphoserine: Ser-375 and Ser-377.

Belongs to the PP2C family. As to quaternary structure, monomer. Interacts with SMAD2; the interaction dephosphorylates SMAD2 in its C-terminal SXS motif resulting in disruption of the SMAD2/SMAD4 complex, SMAD2 nuclear export and termination of the TGF-beta-mediated signaling. Interacts with SMAD2; the interaction dephosphorylates SMAD2 in its C-terminal SXS motif resulting in disruption of the SMAD2/SMAD4 complex, SMAD2 nuclear export and termination of the TGF-beta-mediated signaling. Interacts with the phosphorylated form of IKBKB/IKKB. Mg(2+) is required as a cofactor. Mn(2+) serves as cofactor. Post-translationally, N-myristoylation is essential for the recognition of its substrates for dephosphorylation.

The protein resides in the nucleus. It localises to the cytoplasm. It is found in the cytosol. Its subcellular location is the membrane. The enzyme catalyses O-phospho-L-seryl-[protein] + H2O = L-seryl-[protein] + phosphate. It carries out the reaction O-phospho-L-threonyl-[protein] + H2O = L-threonyl-[protein] + phosphate. In terms of biological role, enzyme with a broad specificity. Negatively regulates TGF-beta signaling through dephosphorylating SMAD2 and SMAD3, resulting in their dissociation from SMAD4, nuclear export of the SMADs and termination of the TGF-beta-mediated signaling. Dephosphorylates PRKAA1 and PRKAA2. Plays an important role in the termination of TNF-alpha-mediated NF-kappa-B activation through dephosphorylating and inactivating IKBKB/IKKB. The chain is Protein phosphatase 1A (PPM1A) from Oryctolagus cuniculus (Rabbit).